The primary structure comprises 190 residues: MVRVSTSEFRVGLRIEIDGQPYLILQNDFVKPGKGQAFNRIKVKNFLTGRVIERTFKSGESVETADVREQQMRFLYSDQEGATFMDDETFEQEMIFWDKIENIRQWLLEDTIYTLVLYNGNVIGVEPPIFMELTIAETAPGVRGDTASGRVLKPAVTNTGAKIMVPIFIEEGEVVKIDTRTGSYESRVSK.

Belongs to the elongation factor P family.

It is found in the cytoplasm. It participates in protein biosynthesis; polypeptide chain elongation. Functionally, involved in peptide bond synthesis. Stimulates efficient translation and peptide-bond synthesis on native or reconstituted 70S ribosomes in vitro. Probably functions indirectly by altering the affinity of the ribosome for aminoacyl-tRNA, thus increasing their reactivity as acceptors for peptidyl transferase. This chain is Elongation factor P 2 (efp2), found in Chlamydia caviae (strain ATCC VR-813 / DSM 19441 / 03DC25 / GPIC) (Chlamydophila caviae).